The primary structure comprises 510 residues: ETS translocation variant 5 (510 aa).

A disordered region spans residues 131–208; sequence FKPLTPPTTP…QPLQMPKMMP (78 aa). Residues 161-174 show a composition bias toward low complexity; that stretch reads GHAPAAGPVQGVGP. Positions 175 to 185 are enriched in pro residues; that stretch reads APAPHSLPEPG. Position 248 is a phosphoserine (serine 248). A Glycyl lysine isopeptide (Lys-Gly) (interchain with G-Cter in SUMO2) cross-link involves residue lysine 350. Residues 368–448 constitute a DNA-binding region (ETS); that stretch reads LQLWQFLVTL…AGERYVYKFV (81 aa).

Interacts (via C-terminal) with ZMYM5 (via N-terminal 120 amino acid region). As to expression, ubiquitous.

The protein localises to the nucleus. In terms of biological role, binds to DNA sequences containing the consensus nucleotide core sequence 5'-GGAA.-3'. The chain is ETS translocation variant 5 (ETV5) from Homo sapiens (Human).